A 601-amino-acid chain; its full sequence is Glutamine--fructose-6-phosphate aminotransferase [isomerizing] (601 aa).

Catalysis depends on Cys2, which acts as the Nucleophile; for GATase activity. Positions 2-218 (CGIVGYIGYD…DHEIVIVKKD (217 aa)) constitute a Glutamine amidotransferase type-2 domain. 2 consecutive SIS domains span residues 284–423 (IIND…EHGR) and 453–591 (IATD…VDKP). The For Fru-6P isomerization activity role is filled by Lys596.

In terms of assembly, homodimer.

It is found in the cytoplasm. It carries out the reaction D-fructose 6-phosphate + L-glutamine = D-glucosamine 6-phosphate + L-glutamate. Functionally, catalyzes the first step in hexosamine metabolism, converting fructose-6P into glucosamine-6P using glutamine as a nitrogen source. In Staphylococcus aureus (strain MRSA252), this protein is Glutamine--fructose-6-phosphate aminotransferase [isomerizing].